A 416-amino-acid chain; its full sequence is Glutamate dehydrogenase (416 aa).

K105 is a catalytic residue.

It belongs to the Glu/Leu/Phe/Val dehydrogenases family. Homohexamer.

The enzyme catalyses L-glutamate + NAD(+) + H2O = 2-oxoglutarate + NH4(+) + NADH + H(+). It catalyses the reaction L-glutamate + NADP(+) + H2O = 2-oxoglutarate + NH4(+) + NADPH + H(+). This is Glutamate dehydrogenase (gdhA) from Thermotoga maritima (strain ATCC 43589 / DSM 3109 / JCM 10099 / NBRC 100826 / MSB8).